The chain runs to 1585 residues: Sterol 3-beta-glucosyltransferase (1585 aa).

The segment covering methionine 1 to proline 18 has biased composition (pro residues). 3 disordered regions span residues methionine 1 to phenylalanine 151, proline 177 to threonine 225, and tyrosine 249 to glycine 279. Polar residues-rich tracts occupy residues aspartate 65–threonine 92, aspartate 105–glutamate 123, and proline 132–glutamate 148. The segment covering tryptophan 178–isoleucine 194 has biased composition (acidic residues). Over residues glutamate 255–glutamate 273 the composition is skewed to low complexity. Residues glutamate 387–proline 555 form the GRAM 1 domain. The 93-residue stretch at leucine 438–phenylalanine 530 folds into the PH domain. Disordered regions lie at residues threonine 625–alanine 645 and aspartate 666–serine 852. Positions leucine 670 to histidine 689 are enriched in basic and acidic residues. Composition is skewed to polar residues over residues threonine 760–valine 785, asparagine 806–glutamate 817, and serine 827–lysine 840. The 72-residue stretch at arginine 862 to lysine 933 folds into the GRAM 2 domain. Residues serine 1043, arginine 1044, aspartate 1046, isoleucine 1358, histidine 1360, histidine 1373, glycine 1377, threonine 1378, aspartate 1397, and glutamine 1398 each coordinate UDP-alpha-D-glucose. Residues asparagine 1499–proline 1552 are disordered. Residues serine 1529–valine 1545 are compositionally biased toward low complexity.

The protein belongs to the glycosyltransferase 28 family.

The protein resides in the cytoplasm. Its subcellular location is the membrane. The catalysed reaction is a sterol + UDP-alpha-D-glucose = a sterol 3-beta-D-glucoside + UDP + H(+). It catalyses the reaction ergosterol + UDP-alpha-D-glucose = ergosteryl 3-beta-D-glucoside + UDP + H(+). Sterol glycosyltransferase responsible for the glycosylation of ergosterol to form ergosterol-glucoside. The protein is Sterol 3-beta-glucosyltransferase of Cryptococcus neoformans var. neoformans serotype D (strain B-3501A) (Filobasidiella neoformans).